Consider the following 470-residue polypeptide: Suppressor of SWI4 1 homolog (470 aa).

In terms of domain architecture, Brix spans 29–292 (PHSFVFTRGR…LIKIQEGVGN (264 aa)). 2 positions are modified to phosphoserine: serine 238 and serine 240. 2 disordered regions span residues 240–264 (SEVEPDGEHNTTELPQAVAGRGNMQ) and 323–470 (AQRQ…RRRN). Residues 342–355 (AHKKKSLAGIKRAR) show a composition bias toward basic residues. At serine 362 the chain carries Phosphoserine. Lysine 441 bears the N6-acetyllysine mark. Residues 447–457 (QRGKAKPRPRA) are compositionally biased toward basic residues.

The protein resides in the nucleus. The protein localises to the nucleolus. Functionally, may have a role in cell growth. This Mus musculus (Mouse) protein is Suppressor of SWI4 1 homolog (Ppan).